A 136-amino-acid chain; its full sequence is Large ribosomal subunit protein uL16c (136 aa).

The protein belongs to the universal ribosomal protein uL16 family. As to quaternary structure, part of the 50S ribosomal subunit.

The protein resides in the plastid. The protein localises to the chloroplast. This is Large ribosomal subunit protein uL16c from Illicium oligandrum (Star anise).